A 167-amino-acid polypeptide reads, in one-letter code: MAEHQVNYASGLPVVLTSVDKLVQWGRSNSLWALSYGLACCAIEMMAAGGSRYDFDRFGTIFRASPRHSEVMIIAGTLCKKHAEFTRRLYDQMPDPKWVISMGSCANTGGMFNTYSTVQGVDRIIPVDIYVPGCAPRPESFQFALMILQKKIRKEKASRKIAPKRLI.

Positions 40, 41, 105, and 134 each coordinate [4Fe-4S] cluster.

It belongs to the complex I 20 kDa subunit family. NDH-1 is composed of 14 different subunits. Subunits NuoB, C, D, E, F, and G constitute the peripheral sector of the complex. [4Fe-4S] cluster serves as cofactor.

The protein localises to the cell inner membrane. The enzyme catalyses a quinone + NADH + 5 H(+)(in) = a quinol + NAD(+) + 4 H(+)(out). In terms of biological role, NDH-1 shuttles electrons from NADH, via FMN and iron-sulfur (Fe-S) centers, to quinones in the respiratory chain. The immediate electron acceptor for the enzyme in this species is believed to be ubiquinone. Couples the redox reaction to proton translocation (for every two electrons transferred, four hydrogen ions are translocated across the cytoplasmic membrane), and thus conserves the redox energy in a proton gradient. This is NADH-quinone oxidoreductase subunit B from Campylobacter jejuni subsp. jejuni serotype O:2 (strain ATCC 700819 / NCTC 11168).